The following is a 108-amino-acid chain: MFKFVIYLFTFIAFANANYTTWSLVTDYTTYCPQSTEITVNNSIITITGPTTLTITGECTLDYVATVEAAPSSIPSNVTVIESNGASKLNLRSLAGAGLVAAIFIAFI.

An N-terminal signal peptide occupies residues 1-17 (MFKFVIYLFTFIAFANA). Asparagine 18, asparagine 41, and asparagine 77 each carry an N-linked (GlcNAc...) asparagine glycan. Asparagine 84 is lipidated: GPI-anchor amidated asparagine. A propeptide spans 85-108 (GASKLNLRSLAGAGLVAAIFIAFI) (removed in mature form).

It belongs to the SED1 family. Post-translationally, the GPI-anchor is attached to the protein in the endoplasmic reticulum and serves to target the protein to the cell surface. There, the glucosamine-inositol phospholipid moiety is cleaved off and the GPI-modified mannoprotein is covalently attached via its lipidless GPI glycan remnant to the 1,6-beta-glucan of the outer cell wall layer.

It is found in the secreted. Its subcellular location is the cell wall. The protein resides in the membrane. Its function is as follows. Cell wall protein that plays a role in adaptation and resistance to cell wall stress. The chain is Cell wall protein PGA48 (PGA48) from Candida albicans (strain SC5314 / ATCC MYA-2876) (Yeast).